The following is a 329-amino-acid chain: Lipoyl synthase (329 aa).

The disordered stretch occupies residues 1–23; that stretch reads MTDLTATPAPAEPAASAYDPTAK. [4Fe-4S] cluster is bound by residues Cys-76, Cys-81, Cys-87, Cys-102, Cys-106, Cys-109, and Ser-316. The region spanning 87–305 is the Radical SAM core domain; sequence CFGKGTATFM…EEEAYKMGFT (219 aa).

It belongs to the radical SAM superfamily. Lipoyl synthase family. It depends on [4Fe-4S] cluster as a cofactor.

It localises to the cytoplasm. The enzyme catalyses [[Fe-S] cluster scaffold protein carrying a second [4Fe-4S](2+) cluster] + N(6)-octanoyl-L-lysyl-[protein] + 2 oxidized [2Fe-2S]-[ferredoxin] + 2 S-adenosyl-L-methionine + 4 H(+) = [[Fe-S] cluster scaffold protein] + N(6)-[(R)-dihydrolipoyl]-L-lysyl-[protein] + 4 Fe(3+) + 2 hydrogen sulfide + 2 5'-deoxyadenosine + 2 L-methionine + 2 reduced [2Fe-2S]-[ferredoxin]. Its pathway is protein modification; protein lipoylation via endogenous pathway; protein N(6)-(lipoyl)lysine from octanoyl-[acyl-carrier-protein]: step 2/2. Catalyzes the radical-mediated insertion of two sulfur atoms into the C-6 and C-8 positions of the octanoyl moiety bound to the lipoyl domains of lipoate-dependent enzymes, thereby converting the octanoylated domains into lipoylated derivatives. The chain is Lipoyl synthase from Burkholderia mallei (strain NCTC 10247).